The primary structure comprises 139 residues: Putative pre-16S rRNA nuclease (139 aa).

It belongs to the YqgF nuclease family.

Its subcellular location is the cytoplasm. In terms of biological role, could be a nuclease involved in processing of the 5'-end of pre-16S rRNA. The sequence is that of Putative pre-16S rRNA nuclease from Legionella pneumophila (strain Paris).